The sequence spans 269 residues: Ribosomal RNA small subunit methyltransferase A (269 aa).

His12, Leu14, Gly39, Glu60, Asp81, and Asn103 together coordinate S-adenosyl-L-methionine.

Belongs to the class I-like SAM-binding methyltransferase superfamily. rRNA adenine N(6)-methyltransferase family. RsmA subfamily.

The protein resides in the cytoplasm. It carries out the reaction adenosine(1518)/adenosine(1519) in 16S rRNA + 4 S-adenosyl-L-methionine = N(6)-dimethyladenosine(1518)/N(6)-dimethyladenosine(1519) in 16S rRNA + 4 S-adenosyl-L-homocysteine + 4 H(+). Specifically dimethylates two adjacent adenosines (A1518 and A1519) in the loop of a conserved hairpin near the 3'-end of 16S rRNA in the 30S particle. May play a critical role in biogenesis of 30S subunits. This is Ribosomal RNA small subunit methyltransferase A from Leptothrix cholodnii (strain ATCC 51168 / LMG 8142 / SP-6) (Leptothrix discophora (strain SP-6)).